A 275-amino-acid chain; its full sequence is Formamidopyrimidine-DNA glycosylase (275 aa).

Catalysis depends on Pro2, which acts as the Schiff-base intermediate with DNA. Glu3 (proton donor) is an active-site residue. Lys58 (proton donor; for beta-elimination activity) is an active-site residue. DNA is bound by residues His93, Arg111, and Arg156. The FPG-type zinc finger occupies 241–275 (FVYDRAGQPCRVCGTPVRQIVQGQRSTYFCPTCQR). Arg265 (proton donor; for delta-elimination activity) is an active-site residue.

This sequence belongs to the FPG family. As to quaternary structure, monomer. It depends on Zn(2+) as a cofactor.

The enzyme catalyses Hydrolysis of DNA containing ring-opened 7-methylguanine residues, releasing 2,6-diamino-4-hydroxy-5-(N-methyl)formamidopyrimidine.. It carries out the reaction 2'-deoxyribonucleotide-(2'-deoxyribose 5'-phosphate)-2'-deoxyribonucleotide-DNA = a 3'-end 2'-deoxyribonucleotide-(2,3-dehydro-2,3-deoxyribose 5'-phosphate)-DNA + a 5'-end 5'-phospho-2'-deoxyribonucleoside-DNA + H(+). Its function is as follows. Involved in base excision repair of DNA damaged by oxidation or by mutagenic agents. Acts as a DNA glycosylase that recognizes and removes damaged bases. Has a preference for oxidized purines, such as 7,8-dihydro-8-oxoguanine (8-oxoG). Has AP (apurinic/apyrimidinic) lyase activity and introduces nicks in the DNA strand. Cleaves the DNA backbone by beta-delta elimination to generate a single-strand break at the site of the removed base with both 3'- and 5'-phosphates. The chain is Formamidopyrimidine-DNA glycosylase from Burkholderia cenocepacia (strain HI2424).